We begin with the raw amino-acid sequence, 235 residues long: UPF0702 transmembrane protein YdfS (235 aa).

2 consecutive transmembrane segments (helical) span residues 32 to 52 (MTIFDFIAAITLGAIAAGLAY) and 60 to 80 (NMAISFSIFVLTIFLISFLSI).

It belongs to the UPF0702 family.

The protein resides in the cell membrane. This Bacillus subtilis (strain 168) protein is UPF0702 transmembrane protein YdfS (ydfS).